Here is a 467-residue protein sequence, read N- to C-terminus: Immunoglobulin superfamily member 21 (467 aa).

The N-terminal stretch at methionine 1–glycine 24 is a signal peptide. The Ig-like 1 domain maps to tyrosine 25 to alanine 132. Cysteines 46 and 116 form a disulfide. N-linked (GlcNAc...) asparagine glycans are attached at residues asparagine 82 and asparagine 165. Residues leucine 229–glutamine 259 are disordered. The segment covering alanine 234–serine 247 has biased composition (basic and acidic residues). The 86-residue stretch at proline 344–isoleucine 429 folds into the Ig-like 2 domain. 2 N-linked (GlcNAc...) asparagine glycosylation sites follow: asparagine 407 and asparagine 444.

Interacts (Ig-like 1 domain) with NRXN2 (via Laminin G-like 1 domain) in a trans-interaction manner.

It localises to the postsynaptic cell membrane. In terms of biological role, involved in synaptic inhibition in the brain. Selectively regulates inhibitory presynaptic differentiation through interacting with presynaptic NRXN2. This chain is Immunoglobulin superfamily member 21, found in Homo sapiens (Human).